A 335-amino-acid chain; its full sequence is Nucleoid-associated protein YejK (335 aa).

This sequence belongs to the YejK family.

It is found in the cytoplasm. The protein resides in the nucleoid. This chain is Nucleoid-associated protein YejK, found in Shigella boydii serotype 18 (strain CDC 3083-94 / BS512).